The chain runs to 177 residues: Large ribosomal subunit protein uL6 (177 aa).

Belongs to the universal ribosomal protein uL6 family. As to quaternary structure, part of the 50S ribosomal subunit.

In terms of biological role, this protein binds to the 23S rRNA, and is important in its secondary structure. It is located near the subunit interface in the base of the L7/L12 stalk, and near the tRNA binding site of the peptidyltransferase center. In Aliivibrio salmonicida (strain LFI1238) (Vibrio salmonicida (strain LFI1238)), this protein is Large ribosomal subunit protein uL6.